Here is a 371-residue protein sequence, read N- to C-terminus: MSFELLATDGKARRGRLTFPRGVVETPAFMPVGTYGTVKGMLPRDIEATGAQMILGNTFHLWLRPGTEVIKGHGDLHDFMQWKGPILTDSGGFQVFSLGAMRKIKEEGVTFASPVDGAKVFMGPEESMQVQRDLGSDVVMIFDECTPYPADEDVARVSMELSLRWAKRSKVAHGENTAALFGIVQGGMHENLRKRSLEGLDEIGFDGLAIGGLSVGEPKHEMIKVLDYLPGLMPADKPRYLMGVGKPEDLVEGVRRGVDMFDCVMPTRNARNGHLFIDTGVLKIRNAFHRHDNTPLDPTCDCYTCKNFSRAYLHHLDKCGEMLGSMLNTIHNLRHYQLLMAGLREAIQQGTLAAFVDAFYAKRGLPTPPLG.

Asp-89 acts as the Proton acceptor in catalysis. Substrate is bound by residues 89–93 (DSGGF), Asp-143, Gln-185, and Gly-212. The interval 243–249 (GVGKPED) is RNA binding. Asp-262 functions as the Nucleophile in the catalytic mechanism. The tract at residues 267–271 (TRNAR) is RNA binding; important for wobble base 34 recognition. Zn(2+) contacts are provided by Cys-300, Cys-302, Cys-305, and His-331.

Belongs to the queuine tRNA-ribosyltransferase family. In terms of assembly, homodimer. Within each dimer, one monomer is responsible for RNA recognition and catalysis, while the other monomer binds to the replacement base PreQ1. Requires Zn(2+) as cofactor.

It carries out the reaction 7-aminomethyl-7-carbaguanine + guanosine(34) in tRNA = 7-aminomethyl-7-carbaguanosine(34) in tRNA + guanine. It functions in the pathway tRNA modification; tRNA-queuosine biosynthesis. Functionally, catalyzes the base-exchange of a guanine (G) residue with the queuine precursor 7-aminomethyl-7-deazaguanine (PreQ1) at position 34 (anticodon wobble position) in tRNAs with GU(N) anticodons (tRNA-Asp, -Asn, -His and -Tyr). Catalysis occurs through a double-displacement mechanism. The nucleophile active site attacks the C1' of nucleotide 34 to detach the guanine base from the RNA, forming a covalent enzyme-RNA intermediate. The proton acceptor active site deprotonates the incoming PreQ1, allowing a nucleophilic attack on the C1' of the ribose to form the product. After dissociation, two additional enzymatic reactions on the tRNA convert PreQ1 to queuine (Q), resulting in the hypermodified nucleoside queuosine (7-(((4,5-cis-dihydroxy-2-cyclopenten-1-yl)amino)methyl)-7-deazaguanosine). This Pseudomonas syringae pv. tomato (strain ATCC BAA-871 / DC3000) protein is Queuine tRNA-ribosyltransferase.